Consider the following 158-residue polypeptide: Transcriptional repressor NrdR (158 aa).

A zinc finger lies at 3-34; that stretch reads CPSCQNTDSRVLESRAADAGRSVRRRRECLHC. Positions 49–139 constitute an ATP-cone domain; it reads ITVLKRNGNR…VYRHFRGIND (91 aa).

Belongs to the NrdR family. Requires Zn(2+) as cofactor.

Functionally, negatively regulates transcription of bacterial ribonucleotide reductase nrd genes and operons by binding to NrdR-boxes. In Prochlorococcus marinus (strain MIT 9303), this protein is Transcriptional repressor NrdR.